The primary structure comprises 319 residues: Transaldolase (319 aa).

Residue K132 is the Schiff-base intermediate with substrate of the active site.

Belongs to the transaldolase family. Type 1 subfamily. Homodimer.

Its subcellular location is the cytoplasm. The enzyme catalyses D-sedoheptulose 7-phosphate + D-glyceraldehyde 3-phosphate = D-erythrose 4-phosphate + beta-D-fructose 6-phosphate. It participates in carbohydrate degradation; pentose phosphate pathway; D-glyceraldehyde 3-phosphate and beta-D-fructose 6-phosphate from D-ribose 5-phosphate and D-xylulose 5-phosphate (non-oxidative stage): step 2/3. Transaldolase is important for the balance of metabolites in the pentose-phosphate pathway. The protein is Transaldolase of Alteromonas mediterranea (strain DSM 17117 / CIP 110805 / LMG 28347 / Deep ecotype).